We begin with the raw amino-acid sequence, 244 residues long: Maintenance of ploidy protein mob2 (244 aa).

A disordered region spans residues Asn14–Gly45. Positions Ser23–Ser39 are enriched in low complexity. 2 positions are modified to phosphoserine: Ser46 and Ser48.

Belongs to the MOB1/phocein family. In terms of assembly, interacts with orb6.

Its subcellular location is the cytoplasm. The protein localises to the cell cortex. Its function is as follows. Required for coordinating polarized cell growth during interphase with the onset of mitosis. This Schizosaccharomyces pombe (strain 972 / ATCC 24843) (Fission yeast) protein is Maintenance of ploidy protein mob2 (mob2).